We begin with the raw amino-acid sequence, 352 residues long: uncharacterized protein (352 aa).

Residues 1-22 (MIFKKTILIFIISFFFISISFA) form the signal peptide. A compositionally biased stretch (low complexity) spans 25 to 47 (SSSSSSSSSSSSSSWSSSESSSS). The interval 25–49 (SSSSSSSSSSSSSSWSSSESSSSPA) is disordered. Residues Asn76, Asn110, Asn182, Asn212, and Asn223 are each glycosylated (N-linked (GlcNAc...) asparagine).

The protein localises to the secreted. This is an uncharacterized protein from Dictyostelium discoideum (Social amoeba).